Here is a 213-residue protein sequence, read N- to C-terminus: Holliday junction resolvase RecU (213 aa).

Residues Thr98, Asp100, Glu113, and Gln132 each contribute to the Mg(2+) site.

Belongs to the RecU family. It depends on Mg(2+) as a cofactor.

Its subcellular location is the cytoplasm. The catalysed reaction is Endonucleolytic cleavage at a junction such as a reciprocal single-stranded crossover between two homologous DNA duplexes (Holliday junction).. In terms of biological role, endonuclease that resolves Holliday junction intermediates in genetic recombination. Cleaves mobile four-strand junctions by introducing symmetrical nicks in paired strands. Promotes annealing of linear ssDNA with homologous dsDNA. Required for DNA repair, homologous recombination and chromosome segregation. The sequence is that of Holliday junction resolvase RecU from Ligilactobacillus salivarius (strain UCC118) (Lactobacillus salivarius).